Consider the following 373-residue polypeptide: UDP-N-acetylglucosamine--N-acetylmuramyl-(pentapeptide) pyrophosphoryl-undecaprenol N-acetylglucosamine transferase (373 aa).

UDP-N-acetyl-alpha-D-glucosamine contacts are provided by residues 13–15 (TGG), Asn124, Arg164, Ser192, and Gln293.

Belongs to the glycosyltransferase 28 family. MurG subfamily.

Its subcellular location is the cell inner membrane. The catalysed reaction is di-trans,octa-cis-undecaprenyl diphospho-N-acetyl-alpha-D-muramoyl-L-alanyl-D-glutamyl-meso-2,6-diaminopimeloyl-D-alanyl-D-alanine + UDP-N-acetyl-alpha-D-glucosamine = di-trans,octa-cis-undecaprenyl diphospho-[N-acetyl-alpha-D-glucosaminyl-(1-&gt;4)]-N-acetyl-alpha-D-muramoyl-L-alanyl-D-glutamyl-meso-2,6-diaminopimeloyl-D-alanyl-D-alanine + UDP + H(+). Its pathway is cell wall biogenesis; peptidoglycan biosynthesis. Functionally, cell wall formation. Catalyzes the transfer of a GlcNAc subunit on undecaprenyl-pyrophosphoryl-MurNAc-pentapeptide (lipid intermediate I) to form undecaprenyl-pyrophosphoryl-MurNAc-(pentapeptide)GlcNAc (lipid intermediate II). This is UDP-N-acetylglucosamine--N-acetylmuramyl-(pentapeptide) pyrophosphoryl-undecaprenol N-acetylglucosamine transferase from Allorhizobium ampelinum (strain ATCC BAA-846 / DSM 112012 / S4) (Agrobacterium vitis (strain S4)).